The primary structure comprises 151 residues: Putative pre-16S rRNA nuclease (151 aa).

The protein belongs to the YqgF nuclease family.

Its subcellular location is the cytoplasm. Functionally, could be a nuclease involved in processing of the 5'-end of pre-16S rRNA. The chain is Putative pre-16S rRNA nuclease from Aster yellows witches'-broom phytoplasma (strain AYWB).